The sequence spans 435 residues: GTPase Der (435 aa).

2 consecutive EngA-type G domains span residues 4–167 (PTLA…PSED) and 175–350 (IKFS…ENQT). Residues 10–17 (GRPNVGKS), 57–61 (DTGGI), 119–122 (NKVD), 181–188 (GRPNVGKS), 228–232 (DTAGI), and 293–296 (NKWD) each bind GTP. A KH-like domain is found at 351–435 (RRIQSSVLND…PIHIIARKRK (85 aa)).

Belongs to the TRAFAC class TrmE-Era-EngA-EngB-Septin-like GTPase superfamily. EngA (Der) GTPase family. Associates with the 50S ribosomal subunit.

GTPase that plays an essential role in the late steps of ribosome biogenesis. This Lacticaseibacillus casei (strain BL23) (Lactobacillus casei) protein is GTPase Der.